We begin with the raw amino-acid sequence, 122 residues long: Large ribosomal subunit protein uL14 (122 aa).

The protein belongs to the universal ribosomal protein uL14 family. In terms of assembly, part of the 50S ribosomal subunit. Forms a cluster with proteins L3 and L19. In the 70S ribosome, L14 and L19 interact and together make contacts with the 16S rRNA in bridges B5 and B8.

In terms of biological role, binds to 23S rRNA. Forms part of two intersubunit bridges in the 70S ribosome. The sequence is that of Large ribosomal subunit protein uL14 from Wolinella succinogenes (strain ATCC 29543 / DSM 1740 / CCUG 13145 / JCM 31913 / LMG 7466 / NCTC 11488 / FDC 602W) (Vibrio succinogenes).